A 90-amino-acid polypeptide reads, in one-letter code: Small ribosomal subunit protein uS15c (90 aa).

In terms of assembly, component of the chloroplast small ribosomal subunit (SSU). Mature 70S chloroplast ribosomes of higher plants consist of a small (30S) and a large (50S) subunit. The 30S small subunit contains 1 molecule of ribosomal RNA (16S rRNA) and 24 different proteins. The 50S large subunit contains 3 rRNA molecules (23S, 5S and 4.5S rRNA) and 33 different proteins.

The protein localises to the plastid. The protein resides in the chloroplast. Its function is as follows. Component of the chloroplast ribosome (chloro-ribosome), a dedicated translation machinery responsible for the synthesis of chloroplast genome-encoded proteins, including proteins of the transcription and translation machinery and components of the photosynthetic apparatus. The sequence is that of Small ribosomal subunit protein uS15c (rps15) from Spinacia oleracea (Spinach).